Consider the following 429-residue polypeptide: MKPVFKMLLSLLILWTSLLHAQVRIQITQGVDSARPIAVVPFKWLGTVEPPEKIADIISSDLRNSGKFNPIDPSRMPEKPFTASELITSSWYGLGVDAVVVGQIQAGADNHYLISYQLVELSSGTVLTQNQYKVTQQWLRYAAHSASDEIFQKLTGIKGAFSTRIAYVVQKNTRQLPYELKISDYDGYNPFVVYRSSQPLMSPAWSPDGQKLAYVNFESGRSALVIQNLASGSIQKIANFQGHNGAPAFSPDGAKLAFALSKTGSLNIYMMDLASGNITQITDSRSNNTEPSWFPDSRYLAYTSDQAGRPQVYKIDISGHGVPQRITWNAKQNQNSAVSPDGTFLILVNSKDGQQHIAKQDLKTGDVQILTDTLLDETPSIAPNTTMVIYSSTQNANSVLQLVSTDGRFKALLPEVDGQVKFPAWSPYL.

A signal peptide spans 1 to 21 (MKPVFKMLLSLLILWTSLLHA).

The protein belongs to the TolB family. As to quaternary structure, the Tol-Pal system is composed of five core proteins: the inner membrane proteins TolA, TolQ and TolR, the periplasmic protein TolB and the outer membrane protein Pal. They form a network linking the inner and outer membranes and the peptidoglycan layer.

Its subcellular location is the periplasm. Its function is as follows. Part of the Tol-Pal system, which plays a role in outer membrane invagination during cell division and is important for maintaining outer membrane integrity. TolB occupies a key intermediary position in the Tol-Pal system because it communicates directly with both membrane-embedded components, Pal in the outer membrane and TolA in the inner membrane. This chain is Tol-Pal system protein TolB, found in Hamiltonella defensa subsp. Acyrthosiphon pisum (strain 5AT).